The following is a 395-amino-acid chain: Putative pyridoxal phosphate-dependent acyltransferase (395 aa).

110–111 (GF) provides a ligand contact to pyridoxal 5'-phosphate. Residue His135 coordinates substrate. Residues Ser185, 210–213 (DDAH), and 240–243 (TLSK) each bind pyridoxal 5'-phosphate. Lys243 bears the N6-(pyridoxal phosphate)lysine mark. Substrate is bound at residue Thr357.

Belongs to the class-II pyridoxal-phosphate-dependent aminotransferase family. In terms of assembly, homodimer. It depends on pyridoxal 5'-phosphate as a cofactor.

In Staphylococcus aureus (strain Mu50 / ATCC 700699), this protein is Putative pyridoxal phosphate-dependent acyltransferase.